A 362-amino-acid polypeptide reads, in one-letter code: Phospho-N-acetylmuramoyl-pentapeptide-transferase (362 aa).

The next 10 helical transmembrane spans lie at 27–47 (VMAAMTALLISFACGPAVIRW), 73–93 (TMGGALIIIAIAVTTLLWGDL), 97–117 (YVWVTLLVTLGFGAVGWVDDW), 132–152 (WKYLWTSLIALAAALFLGLTA), 160–180 (LIVPFFKAVSYPLGMLGFVAL), 200–220 (GLAIMPTVMVAGALAIFAYVA), 237–257 (AGELAVFCGALAGAGLGFLWF), 264–284 (VFMGDVGALALGAALGTVAVV), 289–309 (IVLFIMGGLFVAETLSVMVQV), and 339–359 (QVVVRFWIITIMLVLFGLSTL).

The protein belongs to the glycosyltransferase 4 family. MraY subfamily. Mg(2+) serves as cofactor.

It is found in the cell inner membrane. It catalyses the reaction UDP-N-acetyl-alpha-D-muramoyl-L-alanyl-gamma-D-glutamyl-meso-2,6-diaminopimeloyl-D-alanyl-D-alanine + di-trans,octa-cis-undecaprenyl phosphate = di-trans,octa-cis-undecaprenyl diphospho-N-acetyl-alpha-D-muramoyl-L-alanyl-D-glutamyl-meso-2,6-diaminopimeloyl-D-alanyl-D-alanine + UMP. It participates in cell wall biogenesis; peptidoglycan biosynthesis. In terms of biological role, catalyzes the initial step of the lipid cycle reactions in the biosynthesis of the cell wall peptidoglycan: transfers peptidoglycan precursor phospho-MurNAc-pentapeptide from UDP-MurNAc-pentapeptide onto the lipid carrier undecaprenyl phosphate, yielding undecaprenyl-pyrophosphoryl-MurNAc-pentapeptide, known as lipid I. The sequence is that of Phospho-N-acetylmuramoyl-pentapeptide-transferase from Aromatoleum aromaticum (strain DSM 19018 / LMG 30748 / EbN1) (Azoarcus sp. (strain EbN1)).